The primary structure comprises 112 residues: Na(+)/H(+) antiporter subunit C (112 aa).

Helical transmembrane passes span 4–21 (LMSI…YLIL), 28–50 (VVVG…AGLQ), and 70–92 (QALI…VLAY).

The protein belongs to the CPA3 antiporters (TC 2.A.63) subunit C family. In terms of assembly, forms a heterooligomeric complex that consists of seven subunits: MrpA, MrpB, MrpC, MrpD, MrpE, MrpF and MrpG.

It localises to the cell membrane. Its function is as follows. Mnh complex is a Na(+)Li(+)/H(+) antiporter involved in Na(+) and/or Li(+) excretion and Na(+) resistance. Na(+)/H(+) antiport consumes a transmembrane electrical potential, and is thus inferred to be electrogenic. Does not transport K(+), Ca(2+) or Mg(2+). This is Na(+)/H(+) antiporter subunit C (mrpC) from Alkalihalophilus pseudofirmus (strain ATCC BAA-2126 / JCM 17055 / OF4) (Bacillus pseudofirmus).